The following is a 210-amino-acid chain: PITH domain-containing protein 1 (210 aa).

The 173-residue stretch at 19–191 (HEPAERGVEY…EVTICNYEAA (173 aa)) folds into the PITH domain.

The protein belongs to the PITHD1 family.

It localises to the cytoplasm. May play a role in promoting megakaryocyte differentiation by up-regulating RUNX1 expression. The protein is PITH domain-containing protein 1 (pithd1) of Danio rerio (Zebrafish).